We begin with the raw amino-acid sequence, 342 residues long: Holliday junction branch migration complex subunit RuvB (342 aa).

Positions 1–181 (MENRMVTPFD…FGMLCAMEFY (181 aa)) are large ATPase domain (RuvB-L). ATP-binding positions include L20, R21, G62, K65, T66, T67, 128-130 (EDY), R171, Y181, and R218. T66 provides a ligand contact to Mg(2+). The tract at residues 182–252 (TDEELMEIVV…GAKAALDLLE (71 aa)) is small ATPAse domain (RuvB-S). Residues 255–342 (KEGLDKIDNK…KDNQVSIFNK (88 aa)) form a head domain (RuvB-H) region. The DNA site is built by R310 and R315.

This sequence belongs to the RuvB family. As to quaternary structure, homohexamer. Forms an RuvA(8)-RuvB(12)-Holliday junction (HJ) complex. HJ DNA is sandwiched between 2 RuvA tetramers; dsDNA enters through RuvA and exits via RuvB. An RuvB hexamer assembles on each DNA strand where it exits the tetramer. Each RuvB hexamer is contacted by two RuvA subunits (via domain III) on 2 adjacent RuvB subunits; this complex drives branch migration. In the full resolvosome a probable DNA-RuvA(4)-RuvB(12)-RuvC(2) complex forms which resolves the HJ.

The protein localises to the cytoplasm. It carries out the reaction ATP + H2O = ADP + phosphate + H(+). The RuvA-RuvB-RuvC complex processes Holliday junction (HJ) DNA during genetic recombination and DNA repair, while the RuvA-RuvB complex plays an important role in the rescue of blocked DNA replication forks via replication fork reversal (RFR). RuvA specifically binds to HJ cruciform DNA, conferring on it an open structure. The RuvB hexamer acts as an ATP-dependent pump, pulling dsDNA into and through the RuvAB complex. RuvB forms 2 homohexamers on either side of HJ DNA bound by 1 or 2 RuvA tetramers; 4 subunits per hexamer contact DNA at a time. Coordinated motions by a converter formed by DNA-disengaged RuvB subunits stimulates ATP hydrolysis and nucleotide exchange. Immobilization of the converter enables RuvB to convert the ATP-contained energy into a lever motion, pulling 2 nucleotides of DNA out of the RuvA tetramer per ATP hydrolyzed, thus driving DNA branch migration. The RuvB motors rotate together with the DNA substrate, which together with the progressing nucleotide cycle form the mechanistic basis for DNA recombination by continuous HJ branch migration. Branch migration allows RuvC to scan DNA until it finds its consensus sequence, where it cleaves and resolves cruciform DNA. The protein is Holliday junction branch migration complex subunit RuvB of Clostridium botulinum (strain Loch Maree / Type A3).